A 181-amino-acid polypeptide reads, in one-letter code: Transcription antitermination protein NusB (181 aa).

The interval 1 to 36 (MTEDNNKAAGAKPRPARQVRTGLTSTGARKASAKSN) is disordered.

It belongs to the NusB family.

Involved in transcription antitermination. Required for transcription of ribosomal RNA (rRNA) genes. Binds specifically to the boxA antiterminator sequence of the ribosomal RNA (rrn) operons. The polypeptide is Transcription antitermination protein NusB (Variovorax paradoxus (strain S110)).